Reading from the N-terminus, the 312-residue chain is Formimidoylglutamase (312 aa).

Residues H123, D152, H154, D156, C243, and D245 each contribute to the Mn(2+) site.

The protein belongs to the arginase family. It depends on Mn(2+) as a cofactor.

It carries out the reaction N-formimidoyl-L-glutamate + H2O = formamide + L-glutamate. It participates in amino-acid degradation; L-histidine degradation into L-glutamate; L-glutamate from N-formimidoyl-L-glutamate (hydrolase route): step 1/1. In terms of biological role, catalyzes the conversion of N-formimidoyl-L-glutamate to L-glutamate and formamide. The chain is Formimidoylglutamase from Pseudomonas fluorescens (strain ATCC BAA-477 / NRRL B-23932 / Pf-5).